The primary structure comprises 132 residues: DNA-entry nuclease inhibitor (132 aa).

In terms of assembly, this protein is a subunit of a 75 kDa protein complex, which governs binding and entry of donor DNA. The complex is a tetramer of two subunits of the DNA-entry nuclease and two subunits of a competence-specific protein. Only the complex is able to bind ds- and ss-DNA.

Its subcellular location is the cell membrane. Functionally, plays a role in the competence of cells to be transformed. It inhibits the activity of the DNA-entry nuclease. The polypeptide is DNA-entry nuclease inhibitor (nin) (Bacillus subtilis (strain 168)).